A 743-amino-acid chain; its full sequence is MSQEKNEMFESEWSKEREREKQLASGLDTAEKALKAESEELQKSKSELICLYNEVHNLPGASESRDHFLIACDLLRRENSELETKVLKLSQEFAQLNHFTLRGKTAPSNLITSENICKDPESNEPVLEIEIQSPKEEREELCPKLGERKQKEIPEESVKEGSFPREGQKEEGSQQNQDMKDEEKEQRLTMKPEEVVRLREELSRINQSLLQSQSSGDSSDDSGAQYPSSGDKLKYNQQGEVQQLHQNLHRLQILCNSAENELRYERGKNLDLKQHNSLLQEENIKIKIELKHAQQKLLESTKMCSSLTAECKQSQQKIKELELEVLKQTQSIKSQNNLQEKLAQEKSKVADAEEKILDLQRKLEHAHKVCLTDTCISEKQQLEEKIKEATENEAKVKQQYQEEQQKRKLLYQNTDELHRQVRTLQDKENLLEMTCSQQQSRIQQQEALLKQLENEKRKYDEDVKSNQELSEKLSKLQQEKEALREEYLRLLKLLNVHVRNYNEKHQQHKIKLQKVKYRLTNEVELRDKRINEFEDEIGILQHKIEKKAIQDQITAQNDTLLLEKRKLQEQVIEQEQLIHSNKWTISSIQSRVLYMDKENKQLQEISLRLPATKKQKEIYSTEVCTCNNAELQHEDESVPKATEKWKHSEQMETTISDILESEVVNEILPLSNSSFSGKGLVESFVSLQETDDIKSKEAMASSKSPEKSPENLVCSQNSEAGYINVTSLKETHGIQEQDQKSEL.

Basic and acidic residues-rich tracts occupy residues 1 to 22 (MSQEKNEMFESEWSKEREREKQ) and 133 to 193 (SPKE…MKPE). 4 disordered regions span residues 1 to 25 (MSQEKNEMFESEWSKEREREKQLAS), 114 to 193 (ENIC…MKPE), 208 to 233 (SLLQSQSSGDSSDDSGAQYPSSGDKL), and 695 to 715 (SKEAMASSKSPEKSPENLVCS). 2 coiled-coil regions span residues 21–98 (KQLA…QLNH) and 165–580 (REGQ…LIHS). Residues 208–223 (SLLQSQSSGDSSDDSG) are compositionally biased toward low complexity.

This sequence belongs to the prefoldin subunit beta family.

This chain is Coiled-coil domain-containing protein 30 (CCDC30), found in Macaca fascicularis (Crab-eating macaque).